The chain runs to 323 residues: Melanocortin receptor 3 (323 aa).

At 1-37 (MNSSCCPSSSYPTLPNLSQHPAAPSASNRSGSGFCEQ) the chain is on the extracellular side. 3 N-linked (GlcNAc...) asparagine glycosylation sites follow: Asn-2, Asn-16, and Asn-28. Residues 38 to 63 (VFIKPEVFLALGIVSLMENILVILAV) traverse the membrane as a helical segment. The Cytoplasmic segment spans residues 64–75 (VRNGNLHSPMYF). The chain crosses the membrane as a helical span at residues 76–100 (FLCSLAAADMLVSLSNSLETIMIVV). Topologically, residues 101 to 118 (INSDSLTLEDQFIQHMDN) are extracellular. The helical transmembrane segment at 119-140 (IFDSMICISLVASICNLLAIAV) threads the bilayer. Residues 141–160 (DRYVTIFYALRYHSIMTVRK) are Cytoplasmic-facing. A helical membrane pass occupies residues 161 to 181 (ALSLIVAIWVCCGICGVMFIV). Residues 182 to 186 (YSESK) are Extracellular-facing. Residues 187 to 210 (MVIVCLITMFFAMVLLMGTLYIHM) form a helical membrane-spanning segment. The Cytoplasmic portion of the chain corresponds to 211 to 245 (FLFARLHVQRIAALPPADGVAPQQHSCMKGAVTIT). Residues 246–268 (ILLGVFIFCWAPFFLHLVLIITC) form a helical membrane-spanning segment. Residues 269–277 (PTNPYCICY) lie on the Extracellular side of the membrane. Residues 278–301 (TAHFNTYLVLIMCNSVIDPLIYAF) traverse the membrane as a helical segment. The Cytoplasmic segment spans residues 302-323 (RSLELRNTFKEILCGCNGMNVG). Cys-315 carries S-palmitoyl cysteine lipidation.

Belongs to the G-protein coupled receptor 1 family. In terms of tissue distribution, brain.

It is found in the cell membrane. Its function is as follows. Receptor for MSH (alpha, beta and gamma) and ACTH. This receptor is mediated by G proteins which activate adenylate cyclase. Required for expression of anticipatory patterns of activity and wakefulness during periods of limited nutrient availability and for the normal regulation of circadian clock activity in the brain. This chain is Melanocortin receptor 3 (Mc3r), found in Rattus norvegicus (Rat).